The sequence spans 316 residues: L-lactate dehydrogenase (316 aa).

NAD(+)-binding positions include 13–15, 34–36, Tyr67, and 79–83; these read GMI, FDI, and TAGFT. Arg95 contacts substrate. Residues 125-127, Leu150, and Leu154 contribute to the NAD(+) site; that span reads VTN. The substrate site is built by Arg158 and His182. His182 lines the NAD(+) pocket. His182 (proton acceptor) is an active-site residue.

This sequence belongs to the LDH/MDH superfamily. LDH family. As to quaternary structure, homotetramer.

It catalyses the reaction (S)-lactate + NAD(+) = pyruvate + NADH + H(+). It functions in the pathway fermentation; pyruvate fermentation to lactate; (S)-lactate from pyruvate: step 1/1. This Plasmodium berghei protein is L-lactate dehydrogenase.